A 488-amino-acid polypeptide reads, in one-letter code: MALHQSNIIINILLVSAFLLNLVFAFIIIFMERRTANSIWAWLLVLVFLPLVGFILYLLLGRQIQREHIFKLAKEDKVGLEMIVDEQLEALKKQDFSKGNHQIVKFKEMVQMLLYNNAAFLTTDNDLTIYTDGHQKFDDLINDIRHAQSYIHIQYYIIHSDNLGKQLLHELEKKAEEGIEVKMLYDDMGSRDLRKKDLKKFRQKGGHAESFFPSKLPLINLRMNNRNHRKIVVIDGTIGYVGGFNVGDEYIGKSKKFGYWRDTHLRIKGDAVNALQLRFILDWNSQSTRDNLTYESRYFPDVDSGGTIGIQIASSGPDEDWEQIKYGYLKMISSAKESIYIQSPYFIPDQAFLDSIKIAALGGVDVNIMVPNKRDHPFVYWATLKNVASLLEAGVNVYHYDNGFLHSKTLVIDDEVASVGTANMDNRSFTLNFEVNAFIYDEGVARSLKQAFINDMKLSNKLTSEEYAKRNLLVKFKEGISQLLSPIL.

Transmembrane regions (helical) follow at residues 8–28 (IIIN…AFII) and 39–59 (IWAW…LYLL). PLD phosphodiesterase domains follow at residues 223–250 (MNNR…GDEY) and 401–428 (DNGF…DNRS). Active-site residues include His-228, Lys-230, Asp-235, His-406, Lys-408, and Asp-413.

The protein belongs to the phospholipase D family. Cardiolipin synthase subfamily.

It is found in the cell membrane. It carries out the reaction 2 a 1,2-diacyl-sn-glycero-3-phospho-(1'-sn-glycerol) = a cardiolipin + glycerol. In terms of biological role, catalyzes the reversible phosphatidyl group transfer from one phosphatidylglycerol molecule to another to form cardiolipin (CL) (diphosphatidylglycerol) and glycerol. The polypeptide is Cardiolipin synthase 2 (cls2) (Staphylococcus epidermidis (strain ATCC 35984 / DSM 28319 / BCRC 17069 / CCUG 31568 / BM 3577 / RP62A)).